Reading from the N-terminus, the 176-residue chain is ATP-dependent protease subunit HslV (176 aa).

Thr-2 is an active-site residue. Positions 157, 160, and 163 each coordinate Na(+).

It belongs to the peptidase T1B family. HslV subfamily. As to quaternary structure, a double ring-shaped homohexamer of HslV is capped on each side by a ring-shaped HslU homohexamer. The assembly of the HslU/HslV complex is dependent on binding of ATP.

Its subcellular location is the cytoplasm. The enzyme catalyses ATP-dependent cleavage of peptide bonds with broad specificity.. Allosterically activated by HslU binding. Protease subunit of a proteasome-like degradation complex believed to be a general protein degrading machinery. This Salmonella gallinarum (strain 287/91 / NCTC 13346) protein is ATP-dependent protease subunit HslV.